Reading from the N-terminus, the 880-residue chain is Pyruvate, phosphate dikinase (880 aa).

The segment at Met-1–Lys-348 is N-terminal. Arg-97 contacts ATP. Residues Arg-349–Ser-405 are linker 1. A central region spans residues Pro-406 to Ile-503. The residue at position 458 (Thr-458) is a Phosphothreonine; by PDRP1. His-460 (tele-phosphohistidine intermediate) is an active-site residue. A linker 2 region spans residues Asp-504–Ser-538. Residues Leu-539–Ser-880 form a C-terminal region. Substrate is bound by residues Arg-566, Arg-622, Glu-750, Gly-771, Thr-772, Asn-773, and Asp-774. Glu-750 lines the Mg(2+) pocket. Asp-774 is a Mg(2+) binding site. The active-site Proton donor is Cys-836.

It belongs to the PEP-utilizing enzyme family. In terms of assembly, homodimer. It depends on Mg(2+) as a cofactor. Post-translationally, phosphorylation of Thr-458 in the dark inactivates the enzyme. Dephosphorylation upon light stimulation reactivates the enzyme.

It carries out the reaction pyruvate + phosphate + ATP = phosphoenolpyruvate + AMP + diphosphate + H(+). With respect to regulation, activated by light-induced dephosphorylation. Inhibited by dark-induced phosphorylation. Both reactions are catalyzed by PDRP1. In terms of biological role, catalyzes the reversible phosphorylation of pyruvate and phosphate. The polypeptide is Pyruvate, phosphate dikinase (ppdK) (Rickettsia prowazekii (strain Madrid E)).